A 207-amino-acid chain; its full sequence is Large ribosomal subunit protein uL4 (207 aa).

The segment at 49–79 is disordered; the sequence is HKVKSRGEVSGGGKKPWRQKGTGRARAGTSR.

The protein belongs to the universal ribosomal protein uL4 family. Part of the 50S ribosomal subunit.

Functionally, one of the primary rRNA binding proteins, this protein initially binds near the 5'-end of the 23S rRNA. It is important during the early stages of 50S assembly. It makes multiple contacts with different domains of the 23S rRNA in the assembled 50S subunit and ribosome. Forms part of the polypeptide exit tunnel. This chain is Large ribosomal subunit protein uL4, found in Heliobacterium modesticaldum (strain ATCC 51547 / Ice1).